The following is a 508-amino-acid chain: Tyrosine decarboxylase 4 (508 aa).

Lys-318 carries the N6-(pyridoxal phosphate)lysine modification.

The protein belongs to the group II decarboxylase family. As to quaternary structure, homodimer. Pyridoxal 5'-phosphate serves as cofactor.

It catalyses the reaction L-tyrosine + H(+) = tyramine + CO2. The sequence is that of Tyrosine decarboxylase 4 (TYRDC-4) from Petroselinum crispum (Parsley).